Consider the following 342-residue polypeptide: MPILAPLGPSPLSEVFTYSNLPSPVEMATGKDYRHSKAGILSKLPPSIKPYAELLRIHRPLGYYLNISPYVVGVAYTAAIAPVSLPATVLLNRLIILSLWGFLIRSGGCAWNDLIDMDIDRQVSRTKLRPLPRGAISPTSAALLTAIIFGCGGLLLLLLPSQCTVEAGIILFFALLYPFGKRFSDYPQLILVNIAWAIPMAMSSLEVDPLDFPYSTLSMCIFIASVIVMIDVVYACQDAEEDKKIGARSMAVRYSDITDQLAYGFFFSGAISLLLGGVLRGLGLPFIVFSVGGHIFGFLRFLSVTLGEGTKSASVESRAKSSCLLATVFWVLGFFLEYLARS.

Helical transmembrane passes span 71 to 91, 95 to 115, 141 to 161, 163 to 183, 187 to 207, 216 to 236, 261 to 278, 282 to 304, and 319 to 339; these read VVGV…TVLL, IILS…NDLI, AALL…LLPS, CTVE…GKRF, PQLI…SLEV, TLSM…VYAC, LAYG…LGGV, LGLP…FLSV, and AKSS…LEYL.

The protein belongs to the UbiA prenyltransferase family. The cofactor is Mg(2+).

It localises to the membrane. It carries out the reaction 3,5-dimethylorsellinate + (2E,6E)-farnesyl diphosphate = (3R)-3-farnesyl-6-hydroxy-2,3,5-trimethyl-4-oxocyclohexa-1,5-diene-1-carboxylate + diphosphate + H(+). Its pathway is secondary metabolite biosynthesis; terpenoid biosynthesis. Its function is as follows. Polyprenyl transferase; part of the gene cluster that mediates the biosynthesis of terretonin, a fungal meroterpenoid that acts as a mycotoxin. The first step of the pathway is the synthesis of 3,5-dimethylorsellinic acid (DMOA) by the polyketide synthase trt4. DMOA is then prenylated into farnesyl-DMOA by the polyprenyl transferase trt2. Methylation by the methyltransferase trt5 then leads to farnesyl-DMOA methyl ester which is further subject to epoxidation by the FAD-dependent monooxygenase trt8 to yield epoxyfarnesyl-DMOA methyl ester. Cyclization of epoxyfarnesyl-DMOA methyl ester by the terpene cyclase trt1 leads to a tetracycle intermediate which is in turn converted to preterretonin. Dehydrogenase trt9 comes next to transform preterretonin to preterrenoid. The FAD-dependent monooxygenase trt3 is then required for the C-hydroxylation at C16 of preterrenoid to yield terrenoid. The cytochrome P450 trt6 catalyzes three successive oxidations to transform terrenoid into an unstable intermediate, which then undergoes the D-ring expansion and unusual rearrangement of the methoxy group to afford the core skeleton of terretonin. Trt14 catalyzes the D-ring expansion of terretonin involving intramolecular methoxy rearrangement as well as the hydrolysis of the expanded D-ring and the methyl ester moiety. Finally, the nonheme iron-dependent dioxygenase trt7 accomplishes the last two oxidation reactions steps to complete the biosynthesis of terretonin. Terretonin C is produced via spontaneous decarboxylation of the terretonin precursor. Another shunt product of the terretonin biosynthesis is dihydrofarnesyl-DMOA, derived from epoxyfarnesyl-DMOA through hydrolysis of the epoxide. This Aspergillus terreus (strain NIH 2624 / FGSC A1156) protein is Polyprenyl transferase trt2.